A 221-amino-acid polypeptide reads, in one-letter code: NEDD8 ultimate buster 1 (221 aa).

UBA domains follow at residues 1–19, 30–76, and 95–135; these read LGLR…HIAN, EERE…LLHN, and SPSQ…LVHN. The disordered stretch occupies residues 136-193; sequence GGRLPPDLQLSAEDSSSTPSTSPSDSAGTSSASTDEDMETEAVNEILEDIPEHEEDYL. Positions 146–168 are enriched in low complexity; it reads SAEDSSSTPSTSPSDSAGTSSAS. A compositionally biased stretch (acidic residues) spans 169–193; it reads TDEDMETEAVNEILEDIPEHEEDYL.

As to quaternary structure, directly interacts with NEDD8 and PSMD4/S5a, a member of the regulatory subunit of the 26S proteasome. Interacts with AIPL1.

It is found in the nucleus. Specific down-regulator of the NEDD8 conjugation system. Recruits NEDD8 and its conjugates to the proteasome for degradation. This is NEDD8 ultimate buster 1 (NUB1) from Bos taurus (Bovine).